Consider the following 322-residue polypeptide: Undecaprenyl-phosphate 4-deoxy-4-formamido-L-arabinose transferase (322 aa).

At 1-235 (MFEIHPVKKV…TCLTTTPLRM (235 aa)) the chain is on the cytoplasmic side. The chain crosses the membrane as a helical span at residues 236–256 (LSLLGSIIAIGGFSIAVLLVI). Over 257–269 (LRLTFGPQWAAEG) the chain is Periplasmic. The helical transmembrane segment at 270–290 (VFMLFAVLFTFIGAQFIGMGL) threads the bilayer. Topologically, residues 291–322 (LGEYIGRIYTDVRARPRYFVQQVIRPSSKENE) are cytoplasmic.

The protein belongs to the glycosyltransferase 2 family.

Its subcellular location is the cell inner membrane. It carries out the reaction UDP-4-deoxy-4-formamido-beta-L-arabinose + di-trans,octa-cis-undecaprenyl phosphate = 4-deoxy-4-formamido-alpha-L-arabinopyranosyl di-trans,octa-cis-undecaprenyl phosphate + UDP. Its pathway is glycolipid biosynthesis; 4-amino-4-deoxy-alpha-L-arabinose undecaprenyl phosphate biosynthesis; 4-amino-4-deoxy-alpha-L-arabinose undecaprenyl phosphate from UDP-4-deoxy-4-formamido-beta-L-arabinose and undecaprenyl phosphate: step 1/2. The protein operates within bacterial outer membrane biogenesis; lipopolysaccharide biosynthesis. Functionally, catalyzes the transfer of 4-deoxy-4-formamido-L-arabinose from UDP to undecaprenyl phosphate. The modified arabinose is attached to lipid A and is required for resistance to polymyxin and cationic antimicrobial peptides. This Shigella flexneri protein is Undecaprenyl-phosphate 4-deoxy-4-formamido-L-arabinose transferase.